The sequence spans 140 residues: uncharacterized protein (140 aa).

The segment at 34–88 (PLRWRNRARNREKPHSPRAVSSPATHSLPPSNPCRLTPTLSSARPREGSCPSKCS) is disordered.

Expressed in a range of cell lines, including B-cell lymphoma and prostate.

This is an uncharacterized protein from Homo sapiens (Human).